A 425-amino-acid polypeptide reads, in one-letter code: Serine--tRNA ligase (425 aa).

Residue 231–233 (TAE) participates in L-serine binding. Residues 262 to 264 (RTE) and valine 278 each bind ATP. An L-serine-binding site is contributed by glutamate 285. 349-352 (EVTS) is an ATP binding site. Residue threonine 384 coordinates L-serine.

It belongs to the class-II aminoacyl-tRNA synthetase family. Type-1 seryl-tRNA synthetase subfamily. As to quaternary structure, homodimer. The tRNA molecule binds across the dimer.

It is found in the cytoplasm. It catalyses the reaction tRNA(Ser) + L-serine + ATP = L-seryl-tRNA(Ser) + AMP + diphosphate + H(+). The catalysed reaction is tRNA(Sec) + L-serine + ATP = L-seryl-tRNA(Sec) + AMP + diphosphate + H(+). It participates in aminoacyl-tRNA biosynthesis; selenocysteinyl-tRNA(Sec) biosynthesis; L-seryl-tRNA(Sec) from L-serine and tRNA(Sec): step 1/1. Its function is as follows. Catalyzes the attachment of serine to tRNA(Ser). Is also able to aminoacylate tRNA(Sec) with serine, to form the misacylated tRNA L-seryl-tRNA(Sec), which will be further converted into selenocysteinyl-tRNA(Sec). The polypeptide is Serine--tRNA ligase (Dictyoglomus thermophilum (strain ATCC 35947 / DSM 3960 / H-6-12)).